Here is a 566-residue protein sequence, read N- to C-terminus: MTTHNSQYSAETTHPDKQESSPAPTAAGTTASNVSTTGNATTPDASIALNADATPVADVPPRLFGSFVEHLGRCVYGGIYEPSHPTADENGFRQDVLDLVKELGVTCVRYPGGNFVSNYNWEDGIGPRENRPMRRDLAWHCTETNEMGIDDFYRWSQKAGTEIMLAVNMGTRGLKAALDELEYVNGAPGTAWADQRVANGIEEPMDIKMWCIGNEMDGPWQVGHMSPEEYAGAVDKVAHAMKLAESGLELVACGSSGAYMPTFGTWEKTVLTKAYENLDFVSCHAYYFDRGHKTRAAASMQDFLASSEDMTKFIATVSDAADQAREANNGTKDIALSFDEWGVWYSDKWNEQEDQWKAEAAQGLHHEPWPKSPHLLEDIYTAADAVVEGSLMITLLKHCDRVRSASRAQLVNVIAPIMAEEHGPAWRQTTFYPFAEAALHARGQAYAPAISSPTIHTEAYGDVPAIDAVVTWDEQARTGLLLAVNRDANTPHTLTIDLSGLPGLPGLGTLALGKAQLLHEDDPYRTNTAEAPEAVTPQPLDIAMNATGTCTATLPAISWISVEFHG.

The span at 1-12 shows a compositional bias: polar residues; it reads MTTHNSQYSAET. The interval 1-39 is disordered; sequence MTTHNSQYSAETTHPDKQESSPAPTAAGTTASNVSTTGN. Residues 20-32 show a composition bias toward low complexity; it reads SSPAPTAAGTTAS. Glutamate 69, asparagine 114, and asparagine 214 together coordinate alpha-L-arabinofuranose. Glutamate 215 acts as the Proton donor/acceptor in catalysis. Alpha-L-arabinofuranose-binding residues include tyrosine 286, glutamate 340, and glutamine 409. Residue glutamate 340 is the Nucleophile of the active site.

This sequence belongs to the glycosyl hydrolase 51 family. Homohexamer; trimer of dimers.

It localises to the cytoplasm. It carries out the reaction Hydrolysis of terminal non-reducing alpha-L-arabinofuranoside residues in alpha-L-arabinosides.. The protein operates within glycan metabolism; L-arabinan degradation. With respect to regulation, completely inhibited by Hg(2+) and Cu(2+) ions, whereas 1 mM Zn(2+) inhibited activity by 51%. In terms of biological role, involved in the degradation of arabinan and is a key enzyme in the complete degradation of the plant cell wall. Catalyzes the cleavage of terminal alpha-(1-&gt;5)-arabinofuranosyl bonds in different hemicellulosic homopolysaccharides (branched and debranched arabinans). It is active with sugar beet arabinan and wheat arabinoxylan. It also exhibited activity against alpha-(1-&gt;5)-linked arabinobiose, arabinotriose, arabinotetraose, and arabinopentaose. The chain is Intracellular exo-alpha-(1-&gt;5)-L-arabinofuranosidase (abfB) from Bifidobacterium longum.